A 211-amino-acid chain; its full sequence is tRNA (guanine-N(7)-)-methyltransferase (211 aa).

S-adenosyl-L-methionine is bound by residues Glu44, Asp69, Asp96, and Asp118. Residue Asp118 is part of the active site. Lys122 contacts substrate. The tract at residues 124–129 is interaction with RNA; it reads KHEKRR. Substrate-binding positions include Asp154 and 191-194; that span reads TEYE.

It belongs to the class I-like SAM-binding methyltransferase superfamily. TrmB family.

The catalysed reaction is guanosine(46) in tRNA + S-adenosyl-L-methionine = N(7)-methylguanosine(46) in tRNA + S-adenosyl-L-homocysteine. It participates in tRNA modification; N(7)-methylguanine-tRNA biosynthesis. Functionally, catalyzes the formation of N(7)-methylguanine at position 46 (m7G46) in tRNA. The polypeptide is tRNA (guanine-N(7)-)-methyltransferase (Streptococcus pyogenes serotype M6 (strain ATCC BAA-946 / MGAS10394)).